A 264-amino-acid polypeptide reads, in one-letter code: Matrilysin (264 aa).

A signal peptide spans 1 to 17; it reads MQLTLFCFVCLLPGHLA. Residues 18–94 constitute a propeptide, activation peptide; the sequence is LPLSQEAGDV…PRCGVPDVAE (77 aa). The Cysteine switch signature appears at 85–92; the sequence is PRCGVPDV. Cysteine 87 provides a ligand contact to Zn(2+). Aspartate 153 serves as a coordination point for Ca(2+). 2 residues coordinate Zn(2+): histidine 163 and aspartate 165. Residues aspartate 170, glycine 171, glycine 173, and threonine 175 each contribute to the Ca(2+) site. Histidine 178 is a Zn(2+) binding site. Ca(2+) is bound by residues glycine 185, glycine 187, and aspartate 189. Residue histidine 191 participates in Zn(2+) binding. Positions 193 and 196 each coordinate Ca(2+). Residue histidine 214 participates in Zn(2+) binding. The active site involves glutamate 215. Positions 218 and 224 each coordinate Zn(2+).

It belongs to the peptidase M10A family. Ca(2+) is required as a cofactor. It depends on Zn(2+) as a cofactor. Expressed in the intestinal epithelium (at protein level).

It localises to the secreted. It is found in the extracellular space. The protein resides in the extracellular matrix. It carries out the reaction Cleavage of 14-Ala-|-Leu-15 and 16-Tyr-|-Leu-17 in B chain of insulin. No action on collagen types I, II, IV, V. Cleaves gelatin chain alpha2(I) &gt; alpha1(I).. Degrades casein, gelatins of types I, III, IV, and V, and fibronectin. Activates procollagenase. In terms of biological role, may play a role in tissue reorganization. The sequence is that of Matrilysin (Mmp7) from Mus musculus (Mouse).